The primary structure comprises 279 residues: BEN domain-containing protein 6 (279 aa).

Positions 1–15 are enriched in polar residues; that stretch reads MQKIVQTDEITNTQA. Disordered regions lie at residues 1–65 and 134–172; these read MQKI…LAEL and RATNNSSPDSFASTCSNSNSNSSSPVSLKPEEEHQTDEK. A coiled-coil region spans residues 62–99; the sequence is LAELSKEELCAKIKSLKEKLTNTRKENSRLRQSLVMLQ. Over residues 134 to 148 the composition is skewed to polar residues; sequence RATNNSSPDSFASTC. A compositionally biased stretch (basic and acidic residues) spans 162 to 172; it reads KPEEEHQTDEK. Positions 171 to 271 constitute a BEN domain; it reads EKQFQIEKWQ…NCTKKPNLSK (101 aa).

In terms of assembly, interacts (via BEN domain) with RBPJ.

It localises to the nucleus. Acts as a corepressor of recombining binding protein suppressor hairless (RBPJ) and inhibits Notch signaling in neural stem cells, thereby opposing their self-renewal and promoting neurogenesis. The sequence is that of BEN domain-containing protein 6 (BEND6) from Homo sapiens (Human).